The chain runs to 1043 residues: F-box DNA helicase 1 (1043 aa).

The disordered stretch occupies residues 30–56; it reads QRWTNRDPNHGLYPKPRTKRGSRGQGS. The PIP-box motif lies at 57–64; it reads QRCIPEFF. The tract at residues 101-191 is disordered; sequence CALPQEGSAG…QDAGDVGPDP (91 aa). Phosphoserine is present on Ser-124. The region spanning 138 to 184 is the F-box domain; sequence SRWDGVSKKAPRHHLSVPCTRPREARQEAEDSTSRLSAESGETDQDA. The segment covering 158–170 has biased composition (basic and acidic residues); it reads RPREARQEAEDST. A UvrD-like helicase ATP-binding domain is found at 442-705; the sequence is THEQQLILNH…FYLTQSFRFG (264 aa). 463-470 is a binding site for ATP; it reads AFAGTGKT. Residues 807 to 811 carry the APIM motif motif; it reads KFIRR.

This sequence belongs to the helicase family. UvrD subfamily. Part of the SCF (SKP1-CUL1-F-box) E3 ubiquitin-protein ligase complex SCF(FBH1) composed of CUL1, SKP1, RBX1 and FBH1. Interacts with RAD51. Interacts with RPA2. Interacts (via PIP-box and RanBP2-type zinc finger) with PCNA. Ubiquitinated. Ubiquitination by the DCX(DTL) complex, also named CRL4(CDT2), leading to its degradation: ubiquitination takes place after its localization to DNA damage sites, possibly to facilitate the translesion synthesis (TLS) pathway.

It localises to the nucleus. Its subcellular location is the chromosome. It catalyses the reaction Couples ATP hydrolysis with the unwinding of duplex DNA by translocating in the 3'-5' direction.. The catalysed reaction is ATP + H2O = ADP + phosphate + H(+). It functions in the pathway protein modification; protein ubiquitination. In terms of biological role, 3'-5' DNA helicase and substrate-recognition component of the SCF(FBH1) E3 ubiquitin ligase complex that plays a key role in response to stalled/damaged replication forks. Involved in genome maintenance by acting as an anti-recombinogenic helicase and preventing extensive strand exchange during homologous recombination: promotes RAD51 filament dissolution from stalled forks, thereby inhibiting homologous recombination and preventing excessive recombination. Also promotes cell death and DNA double-strand breakage in response to replication stress: together with MUS81, promotes the endonucleolytic DNA cleavage following prolonged replication stress via its helicase activity, possibly to eliminate cells with excessive replication stress. Plays a major role in remodeling of stalled DNA forks by catalyzing fork regression, in which the fork reverses and the two nascent DNA strands anneal. In addition to the helicase activity, also acts as the substrate-recognition component of the SCF(FBH1) E3 ubiquitin ligase complex, a complex that mediates ubiquitination of RAD51, leading to regulate RAD51 subcellular location. The protein is F-box DNA helicase 1 of Homo sapiens (Human).